We begin with the raw amino-acid sequence, 227 residues long: NAD(P)H-quinone oxidoreductase subunit K, chloroplastic (227 aa).

The [4Fe-4S] cluster site is built by Cys43, Cys44, Cys108, and Cys139.

It belongs to the complex I 20 kDa subunit family. In terms of assembly, NDH is composed of at least 16 different subunits, 5 of which are encoded in the nucleus. [4Fe-4S] cluster is required as a cofactor.

Its subcellular location is the plastid. The protein resides in the chloroplast thylakoid membrane. It catalyses the reaction a plastoquinone + NADH + (n+1) H(+)(in) = a plastoquinol + NAD(+) + n H(+)(out). The enzyme catalyses a plastoquinone + NADPH + (n+1) H(+)(in) = a plastoquinol + NADP(+) + n H(+)(out). Its function is as follows. NDH shuttles electrons from NAD(P)H:plastoquinone, via FMN and iron-sulfur (Fe-S) centers, to quinones in the photosynthetic chain and possibly in a chloroplast respiratory chain. The immediate electron acceptor for the enzyme in this species is believed to be plastoquinone. Couples the redox reaction to proton translocation, and thus conserves the redox energy in a proton gradient. The chain is NAD(P)H-quinone oxidoreductase subunit K, chloroplastic from Pelargonium hortorum (Common geranium).